The primary structure comprises 803 residues: Volume-regulated anion channel subunit LRRC8B (803 aa).

Topologically, residues 1–25 are cytoplasmic; the sequence is MITLTELKCLADAQSSYHILKPWWD. A helical transmembrane segment spans residues 26-46; it reads VFWYYITLIMLLVAVLAGALQ. Over 47–119 the chain is Extracellular; the sequence is LTQSRVLCCL…YEKQLHWFAK (73 aa). 2 cysteine pairs are disulfide-bonded: Cys55-Cys304 and Cys109-Cys289. Residue Asn78 is glycosylated (N-linked (GlcNAc...) asparagine). A helical membrane pass occupies residues 120-140; the sequence is FFPYLVLLHTLIFAACSNFWL. At 141-261 the chain is on the cytoplasmic side; the sequence is HYPSTSSRLE…DIIYRVYLKQ (121 aa). Ser186 and Ser196 each carry phosphoserine. Residues 262–282 form a helical membrane-spanning segment; sequence IIVKVILFVLIITYVPYFLSY. Over 283–307 the chain is Extracellular; the sequence is ITLEIDCSIDVQAFTGYKRYQCVYS. A helical transmembrane segment spans residues 308–328; it reads LAEIFKVLASFYVILVMLYGL. The Cytoplasmic portion of the chain corresponds to 329-803; that stretch reads TSSYSLWWML…ERLQTCLDKC (475 aa). LRR repeat units follow at residues 415 to 439, 440 to 462, 464 to 486, 488 to 509, 511 to 532, 539 to 559, 562 to 582, 586 to 607, 609 to 630, 634 to 655, 657 to 678, 680 to 701, 703 to 724, 726 to 747, and 749 to 771; these read VKNSQDKVELHLFMLNGLPDNVFEL, TEMEVLSLELIPEVKLPAAVAQL, NLRELHVYHSSLVVDHPALAFLE, NLRILRLKFTEMGKIPRWVFHL, NLKELYLSGCVLPEQLSSLHLE, NLRTLYLKSSLSRIPQVVTDL, SLQKLSLDNEGSKLVVLNNLK, NLKSLELLSCDLERIPHSIFSL, NLHELDLKENNLKTVEEIISFQ, SLSCLKLWHNNIAYIPAQIGAL, NLEQLFLGHNNIESLPLQLFLC, KLHYLDLSYNHLTFIPEEIQYL, NLQYFAVTNNNIEMLPDGLFQC, KLQCLLLGRNSLTDLSPLVGEL, and NLTHLELTGNYLETLPVELEGCQ.

Belongs to the LRRC8 family. In terms of assembly, heterohexamer; oligomerizes with other LRRC8 proteins (LRRC8A, LRRC8C, LRRC8D and/or LRRC8E) to form a heterohexamer. In vivo, the subunit composition may depend primarily on expression levels, and heterooligomeric channels containing various proportions of the different LRRC8 proteins may coexist.

It is found in the cell membrane. Its subcellular location is the endoplasmic reticulum membrane. The enzyme catalyses chloride(in) = chloride(out). It carries out the reaction iodide(out) = iodide(in). The catalysed reaction is taurine(out) = taurine(in). Functionally, non-essential component of the volume-regulated anion channel (VRAC, also named VSOAC channel), an anion channel required to maintain a constant cell volume in response to extracellular or intracellular osmotic changes. The VRAC channel conducts iodide better than chloride and can also conduct organic osmolytes like taurine. Channel activity requires LRRC8A plus at least one other family member (LRRC8B, LRRC8C, LRRC8D or LRRC8E); channel characteristics depend on the precise subunit composition. The polypeptide is Volume-regulated anion channel subunit LRRC8B (Mus musculus (Mouse)).